The following is a 469-amino-acid chain: 3-isopropylmalate dehydratase large subunit (469 aa).

The [4Fe-4S] cluster site is built by C347, C410, and C413.

The protein belongs to the aconitase/IPM isomerase family. LeuC type 1 subfamily. Heterodimer of LeuC and LeuD. Requires [4Fe-4S] cluster as cofactor.

The catalysed reaction is (2R,3S)-3-isopropylmalate = (2S)-2-isopropylmalate. It participates in amino-acid biosynthesis; L-leucine biosynthesis; L-leucine from 3-methyl-2-oxobutanoate: step 2/4. Its function is as follows. Catalyzes the isomerization between 2-isopropylmalate and 3-isopropylmalate, via the formation of 2-isopropylmaleate. In Cupriavidus pinatubonensis (strain JMP 134 / LMG 1197) (Cupriavidus necator (strain JMP 134)), this protein is 3-isopropylmalate dehydratase large subunit.